We begin with the raw amino-acid sequence, 222 residues long: Niacin transporter NiaX (222 aa).

The next 5 membrane-spanning stretches (helical) occupy residues 34–54, 72–94, 101–120, 135–155, and 167–187; these read NLII…MMPV, MAAM…LGFM, TIWL…AYVL, IFNF…VYAF, and ALLN…MIDF.

It belongs to the vitamin uptake transporter (VUT/ECF) (TC 2.A.88) family. As to quaternary structure, in L.lactis forms a stable complex with EcfA, EcfA' and EcfT. In E.coli forms a stable energy-coupling factor (ECF) transporter complex composed of 2 membrane-embedded substrate-binding proteins (S component), 2 ATP-binding proteins (A and A' components) and 2 transmembrane proteins (T component), probably with a stoichiometry of 2:1:1:2. May be able to interact with more than 1 S component at a time.

It is found in the cell membrane. Probably a niacin-binding protein that interacts with the energy-coupling factor (ECF) ABC-transporter complex. Unlike classic ABC transporters this ECF transporter provides the energy necessary to transport a number of different substrates. The substrates themselves are bound by transmembrane, not extracytoplasmic soluble proteins. Uptake of niacin into proteosomes containing EcfA1A2T and Niax has been demonstrated. Uptake requires hydrolyzable Mg-ATP and is substrate-specific; NiaX-containing proteosomes did not transport riboflavin. This chain is Niacin transporter NiaX (niaX), found in Lactococcus lactis subsp. cremoris (strain MG1363).